We begin with the raw amino-acid sequence, 174 residues long: NADH-ubiquinone oxidoreductase chain 6 (174 aa).

5 consecutive transmembrane segments (helical) span residues 1–21 (MTYT…GFSS), 24–44 (SPIY…AVIL), 47–67 (GGGY…MVVF), 86–106 (VEVL…VLWA), and 151–171 (WLVV…IEIA).

It belongs to the complex I subunit 6 family. In terms of assembly, core subunit of respiratory chain NADH dehydrogenase (Complex I) which is composed of 45 different subunits.

Its subcellular location is the mitochondrion inner membrane. The enzyme catalyses a ubiquinone + NADH + 5 H(+)(in) = a ubiquinol + NAD(+) + 4 H(+)(out). Core subunit of the mitochondrial membrane respiratory chain NADH dehydrogenase (Complex I) which catalyzes electron transfer from NADH through the respiratory chain, using ubiquinone as an electron acceptor. Essential for the catalytic activity and assembly of complex I. The polypeptide is NADH-ubiquinone oxidoreductase chain 6 (MT-ND6) (Hylobates lar (Lar gibbon)).